The following is a 195-amino-acid chain: Transcriptional regulator LdrP (195 aa).

An HTH crp-type domain is found at 110 to 182 (GELRARIARY…YRRVYLLDLA (73 aa)). The H-T-H motif DNA-binding region spans 142–161 (HEEIADATASIRESVSKVLA).

Functionally, activates transcription. Positively regulates PcrtB promoter upstream of the crtB operon in a cAMP-independent manner. Regulated genes include genes encoding DNA photolyase, phytoene synthase and cytochrome P450 monooxygenase, which are involved in carotenoid biosynthesis. Positively regulates the light-inducible gene cluster in the megaplasmid in a cAMP-independent manner. The chain is Transcriptional regulator LdrP from Thermus thermophilus (strain ATCC BAA-163 / DSM 7039 / HB27).